The following is a 197-amino-acid chain: Ribonuclease HII (197 aa).

One can recognise an RNase H type-2 domain in the interval 11–197 (HLIAGVDEVG…FAPVKKILGL (187 aa)). Residues Asp-17, Glu-18, and Asp-109 each coordinate a divalent metal cation.

The protein belongs to the RNase HII family. It depends on Mn(2+) as a cofactor. Mg(2+) is required as a cofactor.

Its subcellular location is the cytoplasm. It catalyses the reaction Endonucleolytic cleavage to 5'-phosphomonoester.. Its function is as follows. Endonuclease that specifically degrades the RNA of RNA-DNA hybrids. The chain is Ribonuclease HII from Actinobacillus pleuropneumoniae serotype 7 (strain AP76).